Here is a 323-residue protein sequence, read N- to C-terminus: Syntaxin-42 (323 aa).

At 1 to 302 (MATRNRTTVY…QREGAMVKCA (302 aa)) the chain is on the cytoplasmic side. The 63-residue stretch at 227-289 (QHVSAERERE…EEGYKQLQKA (63 aa)) folds into the t-SNARE coiled-coil homology domain. A helical; Anchor for type IV membrane protein transmembrane segment spans residues 303 to 323 (TILLVLCLIMIVLLILKNILF).

The protein belongs to the syntaxin family. As to quaternary structure, interacts with VTI12 and SYP61 to form a t-SNARE complex and with VPS45. In terms of tissue distribution, expressed at low levels in roots, stems, flowers and leaves.

It is found in the golgi apparatus. Its subcellular location is the trans-Golgi network membrane. Contributes to the regulation of secretory and vacuolar transport pathways in the post-Golgi network, and to the maintenance of the Golgi apparatus and trans-Golgi network (TGN) morphologies. Vesicle trafficking protein that functions in the secretory pathway and mediates liposome fusion. Required for extracellular resistance responses to a fungal pathogen. Also involved in the protection of chloroplasts from salicylic acid-dependent biotic stress. This is Syntaxin-42 from Arabidopsis thaliana (Mouse-ear cress).